The following is a 278-amino-acid chain: Elongation factor Ts (278 aa).

The tract at residues 80 to 83 (TDFV) is involved in Mg(2+) ion dislocation from EF-Tu.

This sequence belongs to the EF-Ts family.

It is found in the cytoplasm. Functionally, associates with the EF-Tu.GDP complex and induces the exchange of GDP to GTP. It remains bound to the aminoacyl-tRNA.EF-Tu.GTP complex up to the GTP hydrolysis stage on the ribosome. The polypeptide is Elongation factor Ts (Micrococcus luteus (strain ATCC 4698 / DSM 20030 / JCM 1464 / CCM 169 / CCUG 5858 / IAM 1056 / NBRC 3333 / NCIMB 9278 / NCTC 2665 / VKM Ac-2230) (Micrococcus lysodeikticus)).